A 148-amino-acid chain; its full sequence is Large ribosomal subunit protein bL9 (148 aa).

It belongs to the bacterial ribosomal protein bL9 family.

Functionally, binds to the 23S rRNA. The protein is Large ribosomal subunit protein bL9 of Solibacter usitatus (strain Ellin6076).